Reading from the N-terminus, the 271-residue chain is Chorismate dehydratase (271 aa).

The protein belongs to the MqnA/MqnD family. MqnA subfamily.

The catalysed reaction is chorismate = 3-[(1-carboxyvinyl)-oxy]benzoate + H2O. It participates in quinol/quinone metabolism; menaquinone biosynthesis. Its function is as follows. Catalyzes the dehydration of chorismate into 3-[(1-carboxyvinyl)oxy]benzoate, a step in the biosynthesis of menaquinone (MK, vitamin K2). This chain is Chorismate dehydratase, found in Thermus thermophilus (strain ATCC 27634 / DSM 579 / HB8).